A 546-amino-acid chain; its full sequence is uncharacterized protein (546 aa).

9 consecutive transmembrane segments (helical) span residues E27–F46, N59–T78, F83–L100, S114–A134, P143–F163, M176–I196, V204–A224, L237–F257, and M268–W288.

Its subcellular location is the cell membrane. This is an uncharacterized protein from Bacillus subtilis (strain 168).